The following is a 124-amino-acid chain: Photoactive yellow protein (124 aa).

The PAS domain maps to 22-85; the sequence is AEYLPFGAVL…GEFLRFHQTG (64 aa). Residue Cys-68 is modified to S-(4-hydroxycinnamyl)cysteine.

This sequence belongs to the photoactive yellow protein family. In terms of processing, the 4-hydroxycinnamic acid (p-coumaric acid) chromophore is covalently bound via a thioester linkage.

Its function is as follows. This photoactive protein is a photoreceptor with kinetics similar to that of rhodopsin. This Cereibacter sphaeroides (strain ATCC 17023 / DSM 158 / JCM 6121 / CCUG 31486 / LMG 2827 / NBRC 12203 / NCIMB 8253 / ATH 2.4.1.) (Rhodobacter sphaeroides) protein is Photoactive yellow protein (pyp).